We begin with the raw amino-acid sequence, 214 residues long: tRNA (guanine-N(7)-)-methyltransferase (214 aa).

Positions 44, 69, 96, and 118 each coordinate S-adenosyl-L-methionine. The active site involves D118. Residues K122, D154, and 191–194 (TEYE) each bind substrate.

Belongs to the class I-like SAM-binding methyltransferase superfamily. TrmB family.

The catalysed reaction is guanosine(46) in tRNA + S-adenosyl-L-methionine = N(7)-methylguanosine(46) in tRNA + S-adenosyl-L-homocysteine. It functions in the pathway tRNA modification; N(7)-methylguanine-tRNA biosynthesis. In terms of biological role, catalyzes the formation of N(7)-methylguanine at position 46 (m7G46) in tRNA. This chain is tRNA (guanine-N(7)-)-methyltransferase, found in Listeria innocua serovar 6a (strain ATCC BAA-680 / CLIP 11262).